Consider the following 210-residue polypeptide: LexA repressor (210 aa).

The segment at residues 29–49 (VREIGEAVDLSSTSTVHGHIS) is a DNA-binding region (H-T-H motif). Catalysis depends on for autocatalytic cleavage activity residues Ser-130 and Lys-168.

Belongs to the peptidase S24 family. Homodimer.

It carries out the reaction Hydrolysis of Ala-|-Gly bond in repressor LexA.. Represses a number of genes involved in the response to DNA damage (SOS response), including recA and lexA. In the presence of single-stranded DNA, RecA interacts with LexA causing an autocatalytic cleavage which disrupts the DNA-binding part of LexA, leading to derepression of the SOS regulon and eventually DNA repair. This chain is LexA repressor, found in Lactiplantibacillus plantarum (strain ATCC BAA-793 / NCIMB 8826 / WCFS1) (Lactobacillus plantarum).